Reading from the N-terminus, the 707-residue chain is Elongation factor G (707 aa).

Residues 8-288 (QFTRNIGIMA…AVCKFLPSPA (281 aa)) enclose the tr-type G domain. GTP-binding positions include 17–24 (AHIDAGKT), 85–89 (DTPGH), and 139–142 (NKMD). The tract at residues 288-308 (ADTPTVEGTDPSDPNKVIERK) is disordered.

This sequence belongs to the TRAFAC class translation factor GTPase superfamily. Classic translation factor GTPase family. EF-G/EF-2 subfamily.

The protein resides in the cytoplasm. Catalyzes the GTP-dependent ribosomal translocation step during translation elongation. During this step, the ribosome changes from the pre-translocational (PRE) to the post-translocational (POST) state as the newly formed A-site-bound peptidyl-tRNA and P-site-bound deacylated tRNA move to the P and E sites, respectively. Catalyzes the coordinated movement of the two tRNA molecules, the mRNA and conformational changes in the ribosome. In Porphyromonas gingivalis (strain ATCC 33277 / DSM 20709 / CIP 103683 / JCM 12257 / NCTC 11834 / 2561), this protein is Elongation factor G.